A 130-amino-acid chain; its full sequence is Small ribosomal subunit protein uS9 (130 aa).

The protein belongs to the universal ribosomal protein uS9 family.

The protein is Small ribosomal subunit protein uS9 of Delftia acidovorans (strain DSM 14801 / SPH-1).